The following is a 195-amino-acid chain: uncharacterized protein (195 aa).

A disordered region spans residues 86-158 (LPSEGGWTSG…PAPVSGEPPE (73 aa)).

This is an uncharacterized protein from Homo sapiens (Human).